A 197-amino-acid polypeptide reads, in one-letter code: Guanylate kinase (197 aa).

Serine 2 carries the post-translational modification N-acetylserine. Residues 4-186 form the Guanylate kinase-like domain; the sequence is PRPVVLSGPS…AYAELKEALS (183 aa). 14-19 is an ATP binding site; sequence GAGKST. 37–51 serves as a coordination point for substrate; it reads SHTTRNPRPGEENGK. Residues arginine 44, arginine 137, and arginine 148 contribute to the active site. Residue arginine 137 participates in ATP binding. 171–172 contributes to the ATP binding site; sequence ND.

This sequence belongs to the guanylate kinase family. Monomer. Interacts with RD3. As to expression, widely expressed.

The protein localises to the photoreceptor inner segment. It is found in the cytoplasm. The protein resides in the cytosol. It localises to the mitochondrion. It carries out the reaction GMP + ATP = GDP + ADP. With respect to regulation, up-regulated by RD3. In terms of biological role, catalyzes the phosphorylation of GMP to GDP. Essential enzyme for recycling GMP and indirectly, cyclic GMP (cGMP). Involved in the cGMP metabolism in photoreceptors. It may also have a role in the survival and growth progression of some tumors. In addition to its physiological role, GUK1 is essential for converting prodrugs used for the treatment of cancers and viral infections into their pharmacologically active metabolites, most notably acyclovir, ganciclovir, and 6-thioguanine and its closely related analog 6-mercaptopurine. This chain is Guanylate kinase, found in Homo sapiens (Human).